The sequence spans 262 residues: Thiazole synthase (262 aa).

The active-site Schiff-base intermediate with DXP is the Lys97. Residues Gly158, 185 to 186 (AG), and 207 to 208 (NT) each bind 1-deoxy-D-xylulose 5-phosphate. The tract at residues 243–262 (DKAQASTPTVGQPFWHSAEY) is disordered.

This sequence belongs to the ThiG family. As to quaternary structure, homotetramer. Forms heterodimers with either ThiH or ThiS.

The protein localises to the cytoplasm. The catalysed reaction is [ThiS sulfur-carrier protein]-C-terminal-Gly-aminoethanethioate + 2-iminoacetate + 1-deoxy-D-xylulose 5-phosphate = [ThiS sulfur-carrier protein]-C-terminal Gly-Gly + 2-[(2R,5Z)-2-carboxy-4-methylthiazol-5(2H)-ylidene]ethyl phosphate + 2 H2O + H(+). It participates in cofactor biosynthesis; thiamine diphosphate biosynthesis. Its function is as follows. Catalyzes the rearrangement of 1-deoxy-D-xylulose 5-phosphate (DXP) to produce the thiazole phosphate moiety of thiamine. Sulfur is provided by the thiocarboxylate moiety of the carrier protein ThiS. In vitro, sulfur can be provided by H(2)S. This is Thiazole synthase from Neisseria meningitidis serogroup C (strain 053442).